The primary structure comprises 256 residues: Type III pantothenate kinase (256 aa).

6–13 contacts ATP; sequence DVGNSNIV. Residues Tyr-100 and 107-110 contribute to the substrate site; that span reads GADR. Asp-109 serves as the catalytic Proton acceptor. Asp-129 is a binding site for K(+). Residue Thr-132 participates in ATP binding. Thr-184 is a substrate binding site.

This sequence belongs to the type III pantothenate kinase family. Homodimer. NH4(+) is required as a cofactor. K(+) serves as cofactor.

It is found in the cytoplasm. The catalysed reaction is (R)-pantothenate + ATP = (R)-4'-phosphopantothenate + ADP + H(+). It participates in cofactor biosynthesis; coenzyme A biosynthesis; CoA from (R)-pantothenate: step 1/5. Its function is as follows. Catalyzes the phosphorylation of pantothenate (Pan), the first step in CoA biosynthesis. In Geotalea uraniireducens (strain Rf4) (Geobacter uraniireducens), this protein is Type III pantothenate kinase.